Here is an 803-residue protein sequence, read N- to C-terminus: Nucleoporin nup82 (803 aa).

As to quaternary structure, component of the nuclear pore complex (NPC). NPC constitutes the exclusive means of nucleocytoplasmic transport. NPCs allow the passive diffusion of ions and small molecules and the active, nuclear transport receptor-mediated bidirectional transport of macromolecules such as proteins, RNAs, ribonucleoparticles (RNPs), and ribosomal subunits across the nuclear envelope.

It is found in the nucleus. The protein localises to the nuclear pore complex. The protein resides in the nucleus membrane. Its function is as follows. Functions as a component of the nuclear pore complex (NPC). NPC components, collectively referred to as nucleoporins (NUPs), can play the role of both NPC structural components and of docking or interaction partners for transiently associated nuclear transport factors. The sequence is that of Nucleoporin nup82 from Schizosaccharomyces pombe (strain 972 / ATCC 24843) (Fission yeast).